A 428-amino-acid chain; its full sequence is Nocturnin (428 aa).

The transit peptide at 1–72 directs the protein to the mitochondrion; that stretch reads MYQSPRRLCS…PMGNGTSRLY (72 aa). Positions 21 to 66 are disordered; the sequence is RRTLVPGPRRTLAPPVLGSRPASPQLQAAASGAARSRPRTVSPMGN. A compositionally biased stretch (low complexity) spans 39-55; that stretch reads SRPASPQLQAAASGAAR. Mg(2+) is bound at residue Glu192. Residues Glu192, 216–218, Asn260, 283–286, and 321–323 contribute to the substrate site; these read KPW, HLKA, and DFN. The tract at residues 340–350 is interaction with PPARG; sequence NLNSAYKLLSP. His411 provides a ligand contact to substrate.

Belongs to the CCR4/nocturin family. In terms of assembly, interacts with PPARG. Mg(2+) serves as cofactor.

The protein localises to the cytoplasm. It is found in the nucleus. It localises to the perinuclear region. Its subcellular location is the mitochondrion. It carries out the reaction NADP(+) + H2O = phosphate + NAD(+). The catalysed reaction is NADPH + H2O = phosphate + NADH. Phosphatase which catalyzes the conversion of NADP(+) to NAD(+) and of NADPH to NADH. Shows a small preference for NADPH over NADP(+). Represses translation and promotes degradation of target mRNA molecules. Plays an important role in post-transcriptional regulation of metabolic genes under circadian control. Exerts a rhythmic post-transcriptional control of genes necessary for metabolic functions including nutrient absorption, glucose/insulin sensitivity, lipid metabolism, adipogenesis, inflammation and osteogenesis. Plays an important role in favoring adipogenesis over osteoblastogenesis and acts as a key regulator of the adipogenesis/osteogenesis balance. Promotes adipogenesis by facilitating PPARG nuclear translocation which activates its transcriptional activity. Regulates circadian expression of NOS2 in the liver and negatively regulates the circadian expression of IGF1 in the bone. Critical for proper development of early embryos. This is Nocturnin from Rattus norvegicus (Rat).